A 199-amino-acid polypeptide reads, in one-letter code: V-type proton ATPase subunit E (199 aa).

The protein belongs to the V-ATPase E subunit family.

Produces ATP from ADP in the presence of a proton gradient across the membrane. The protein is V-type proton ATPase subunit E of Clostridium botulinum (strain Loch Maree / Type A3).